Consider the following 125-residue polypeptide: MNGNHSAPAIAIAVIDGCDGLWREVLLGIEEEGIPFRLQHHPAGEVVDSAWQAARSSPLLVGIACDRHMLVVHYKNLPASAPLFTLMHHQDSQAHRNTGNNAARLVKGIPFRDLNSEATGEQQDE.

Glu-31 is a binding site for Mg(2+).

Belongs to the DdrB/PduH family. In terms of assembly, component of the DDR complex, a heterotetramer of DdrA(2)/DdrB(2). The DDR complex interacts with the diol dehydratase complex in the presence of ADP but not ATP. Mg(2+) serves as cofactor.

The catalysed reaction is ATP + H2O = ADP + phosphate + H(+). Functionally, small subunit of the diol dehydratase-reactivating factor (DDR), which reactivates suicidally inhibited adenosylcobalamin-dependent diol dehydratase (DD, pddA, pddB, pddC). DDR acts as a chaperone, reactivates inactivated DD holoenzyme in the presence of ATP, Mg(2+) and free adenosylcobalamin (AdoCbl), by mediating the exchange of the tightly bound damaged cofactor AdoCbl for a free intact one. Reactivation takes place in two steps: ADP-dependent cobalamin release, and ATP-dependent dissociation of the DD apoenzyme-DDR complex. DDR has weak ATPase activity which is required for DD reactivation. Activates glycerol-inactivated, O2-inactivated holoenzyme and inactivated enzyme-cyanocobalamin complex. Also reactivates glycerol-inactivated hologlycerol dehydratase, a DD isozyme. The sequence is that of Diol dehydratase-reactivating factor small subunit from Klebsiella michiganensis (strain ATCC 8724 / DSM 4798 / JCM 20051 / NBRC 3318 / NRRL B-199 / KCTC 1686 / BUCSAV 143 / CCM 1901).